The chain runs to 336 residues: MNVYYDKDCNLAIIKGMKVTIVGYGSQGHAHACNLKDSGVDVTVALRAGSASVVKAQNAGLKVASVADAVASADLVMILTPDEFQSSLYRDEIEPKLKQGATLAFAHGFAIHYNQIVPRNDLDVVMIAPKAPGHTVRSEFVKGGGIPDLIAVFQNASGKAREVALSYASAIGGGRTGIIETTFQDETETDLFGEQAVLCGGAVELVKAGFETLVEAGYAPEMAYFECLHELKLIVDLMYEGGIANMNYSISNNAEYGEYVTGPQVINAESRKAMKECLANIQNGEYAKRFILEGMANYPEMTARRRLNAAHPIEQVGGKLRSMMPWIQKIVDKSKN.

Residues 1 to 181 (MNVYYDKDCN…GGGRTGIIET (181 aa)) form the KARI N-terminal Rossmann domain. NADP(+)-binding positions include 24 to 27 (YGSQ), arginine 47, serine 50, serine 52, and 82 to 85 (DEFQ). Histidine 107 is a catalytic residue. Position 133 (glycine 133) interacts with NADP(+). Residues 182-327 (TFQDETETDL…GKLRSMMPWI (146 aa)) enclose the KARI C-terminal knotted domain. Residues aspartate 190, glutamate 194, glutamate 226, and glutamate 230 each contribute to the Mg(2+) site. Serine 251 provides a ligand contact to substrate.

It belongs to the ketol-acid reductoisomerase family. The cofactor is Mg(2+).

It catalyses the reaction (2R)-2,3-dihydroxy-3-methylbutanoate + NADP(+) = (2S)-2-acetolactate + NADPH + H(+). The catalysed reaction is (2R,3R)-2,3-dihydroxy-3-methylpentanoate + NADP(+) = (S)-2-ethyl-2-hydroxy-3-oxobutanoate + NADPH + H(+). It functions in the pathway amino-acid biosynthesis; L-isoleucine biosynthesis; L-isoleucine from 2-oxobutanoate: step 2/4. Its pathway is amino-acid biosynthesis; L-valine biosynthesis; L-valine from pyruvate: step 2/4. In terms of biological role, involved in the biosynthesis of branched-chain amino acids (BCAA). Catalyzes an alkyl-migration followed by a ketol-acid reduction of (S)-2-acetolactate (S2AL) to yield (R)-2,3-dihydroxy-isovalerate. In the isomerase reaction, S2AL is rearranged via a Mg-dependent methyl migration to produce 3-hydroxy-3-methyl-2-ketobutyrate (HMKB). In the reductase reaction, this 2-ketoacid undergoes a metal-dependent reduction by NADPH to yield (R)-2,3-dihydroxy-isovalerate. The sequence is that of Ketol-acid reductoisomerase (NADP(+)) from Geotalea daltonii (strain DSM 22248 / JCM 15807 / FRC-32) (Geobacter daltonii).